We begin with the raw amino-acid sequence, 182 residues long: Ribosome maturation factor RimM (182 aa).

The PRC barrel domain occupies 103–182 (EDEFYWRELF…RIEVDWDPGF (80 aa)).

The protein belongs to the RimM family. Binds ribosomal protein uS19.

The protein localises to the cytoplasm. In terms of biological role, an accessory protein needed during the final step in the assembly of 30S ribosomal subunit, possibly for assembly of the head region. Essential for efficient processing of 16S rRNA. May be needed both before and after RbfA during the maturation of 16S rRNA. It has affinity for free ribosomal 30S subunits but not for 70S ribosomes. The chain is Ribosome maturation factor RimM from Vibrio vulnificus (strain CMCP6).